Consider the following 392-residue polypeptide: Bone morphogenetic protein 15 (392 aa).

The first 25 residues, 1-25, serve as a signal peptide directing secretion; the sequence is MALLTILRILLWGVVLFMEQRVQMA. Positions 26 to 267 are excised as a propeptide; that stretch reads KPGWPSTALL…ESSFLMRSVR (242 aa). N-linked (GlcNAc...) asparagine glycans are attached at residues Asn85, Asn213, Asn236, Asn349, and Asn373. Cystine bridges form between Cys291–Cys357, Cys320–Cys389, and Cys324–Cys391.

Belongs to the TGF-beta family. In terms of assembly, homodimer. But, in contrast to other members of this family, cannot be disulfide-linked. As to expression, ovary specific.

Its subcellular location is the secreted. Its function is as follows. May be involved in follicular development. Oocyte-specific growth/differentiation factor that stimulates folliculogenesis and granulosa cell (GC) growth. The polypeptide is Bone morphogenetic protein 15 (Bmp15) (Mus musculus (Mouse)).